Here is a 482-residue protein sequence, read N- to C-terminus: ADP-ribosylation factor GTPase-activating protein effector protein 1 (482 aa).

The segment at 116–156 (QHKSTHSHHINHQTHPIHSSSSNSNSNNRIPTKTDSSKQHT) is disordered. Over residues 118–127 (KSTHSHHINH) the composition is skewed to basic residues. Low complexity predominate over residues 134-143 (SSSSNSNSNN). One can recognise an Arf-GAP domain in the interval 170 to 297 (DELLSIVRKI…FVIDSNQGRE (128 aa)). The C4-type zinc-finger motif lies at 186–210 (CCDCGSTATVEWVSINLLCILCIKC).

Its subcellular location is the cytoplasm. In terms of biological role, GTPase-activating protein (GAP) for the ADP ribosylation factors ARF1 and ARF2. May be involved in the endocytic pathway. In Saccharomyces cerevisiae (strain ATCC 204508 / S288c) (Baker's yeast), this protein is ADP-ribosylation factor GTPase-activating protein effector protein 1 (AGE1).